Here is a 218-residue protein sequence, read N- to C-terminus: Small ribosomal subunit protein uS3c (218 aa).

The KH type-2 domain occupies 47–118; it reads IQKTIKISSG…KLNIAITRIA (72 aa).

The protein belongs to the universal ribosomal protein uS3 family. Part of the 30S ribosomal subunit.

The protein resides in the plastid. Its subcellular location is the chloroplast. In Lotus japonicus (Lotus corniculatus var. japonicus), this protein is Small ribosomal subunit protein uS3c (rps3).